A 150-amino-acid chain; its full sequence is D-aminoacyl-tRNA deacylase (150 aa).

Residues 138-139 (GP) carry the Gly-cisPro motif, important for rejection of L-amino acids motif.

It belongs to the DTD family. Homodimer.

The protein localises to the cytoplasm. It catalyses the reaction glycyl-tRNA(Ala) + H2O = tRNA(Ala) + glycine + H(+). The catalysed reaction is a D-aminoacyl-tRNA + H2O = a tRNA + a D-alpha-amino acid + H(+). Its function is as follows. An aminoacyl-tRNA editing enzyme that deacylates mischarged D-aminoacyl-tRNAs. Also deacylates mischarged glycyl-tRNA(Ala), protecting cells against glycine mischarging by AlaRS. Acts via tRNA-based rather than protein-based catalysis; rejects L-amino acids rather than detecting D-amino acids in the active site. By recycling D-aminoacyl-tRNA to D-amino acids and free tRNA molecules, this enzyme counteracts the toxicity associated with the formation of D-aminoacyl-tRNA entities in vivo and helps enforce protein L-homochirality. This chain is D-aminoacyl-tRNA deacylase, found in Cytophaga hutchinsonii (strain ATCC 33406 / DSM 1761 / CIP 103989 / NBRC 15051 / NCIMB 9469 / D465).